We begin with the raw amino-acid sequence, 804 residues long: MGKKRIVFFACLLLFTVLLRFSYAGITTESPLSVEQTLSSSNGIYELGFFSPNNSQNLYVGIWFKGIIPRVVVWVANRETPTTDTSANLAISSNGSLLLFNGKHGVVWSIGENFASNGSRAELTDNGNLVVIDNASGRTLWESFEHFGDTMLPFSSLMYNLATGEKRVLTSWKTDTDPSPGVFVGQITPQVPSQVLIMRGSTRYYRTGPWAKTRFTGIPLMDDTYASPFSLQQDANGSGFFTYFDRSFKLSRIIISSEGSMKRFRHNGTDWELSYMAPANSCDIYGVCGPFGLCIVSVPLKCKCLKGFVPHSTEEWKRGNWTGGCARLTELHCQGNSTGKDVNIFHPVTNVKLPDFYEYESSVDAEECHQSCLHNCSCLAFAYIHGIGCLIWNQNLMDAVQFSAGGEILSIRLAHSELGGNKRNKIIVASTVSLSLFVILTSAAFGFWRYRVKHKAYTLKDAWRNDLKSKEVPGLEFFEMNTIQTATNNFSLSNKLGQGGFGSVYKGKLQDGKEIAVKQLSSSSGQGKEEFMNEIVLISKLQHRNLVRVLGCCIEGEEKLLIYEFMLNKSLDTFVFDARKKLEVDWPKRFDIVQGIARGLLYLHRDSRLKVIHRDLKVSNILLDEKMNPKISDFGLARMYEGTQCQDKTRRVVGTLGYMSPEYAWTGVFSEKSDIYSFGVLLLEIIIGEKISRFSYGEEGKTLLAYAWESWGETKGIDLLDQDLADSCRPLEVGRCVQIGLLCVQHQPADRPNTLELLAMLTTTSDLPSPKQPTFVVHSRDDESSLSKDLFTVNEMTQSMILGR.

An N-terminal signal peptide occupies residues 1 to 24 (MGKKRIVFFACLLLFTVLLRFSYA). One can recognise a Bulb-type lectin domain in the interval 25-144 (GITTESPLSV…ASGRTLWESF (120 aa)). The Extracellular portion of the chain corresponds to 25-425 (GITTESPLSV…SELGGNKRNK (401 aa)). 6 N-linked (GlcNAc...) asparagine glycosylation sites follow: Asn53, Asn94, Asn117, Asn134, Asn236, and Asn267. The EGF-like domain occupies 278–314 (PANSCDIYGVCGPFGLCIVSVPLKCKCLKGFVPHSTE). 2 cysteine pairs are disulfide-bonded: Cys282-Cys294 and Cys288-Cys302. Residues Asn320, Asn336, and Asn375 are each glycosylated (N-linked (GlcNAc...) asparagine). Residues 333–415 (CQGNSTGKDV…GEILSIRLAH (83 aa)) enclose the PAN domain. 2 disulfides stabilise this stretch: Cys368/Cys389 and Cys372/Cys378. Residues 426–446 (IIVASTVSLSLFVILTSAAFG) form a helical membrane-spanning segment. Over 447–804 (FWRYRVKHKA…EMTQSMILGR (358 aa)) the chain is Cytoplasmic. Positions 490 to 775 (FSLSNKLGQG…DLPSPKQPTF (286 aa)) constitute a Protein kinase domain. Residues 496 to 504 (LGQGGFGSV) and Lys518 contribute to the ATP site. Phosphoserine is present on residues Ser524 and Ser539. Residues 579–596 (RKKLEVDWPKRFDIVQGI) form a caM-binding region. Residue Asp615 is the Proton acceptor of the active site. Ser619 and Ser632 each carry phosphoserine. Phosphothreonine is present on Thr649. Phosphoserine is present on Ser692.

Belongs to the protein kinase superfamily. Ser/Thr protein kinase family.

It is found in the cell membrane. It catalyses the reaction L-seryl-[protein] + ATP = O-phospho-L-seryl-[protein] + ADP + H(+). The catalysed reaction is L-threonyl-[protein] + ATP = O-phospho-L-threonyl-[protein] + ADP + H(+). This Arabidopsis thaliana (Mouse-ear cress) protein is G-type lectin S-receptor-like serine/threonine-protein kinase At1g61490.